The following is a 490-amino-acid chain: CUGBP Elav-like family member 1 (490 aa).

RRM domains are found at residues 16-99 (IKMF…PADS) and 108-188 (RKLF…FADT). Residues 283 to 312 (PSAGSALTTSSSPLSILTSSGSSPSSNNNS) form a disordered region. The 79-residue stretch at 405–483 (ANLFIYHLPQ…KRLKVQLKRS (79 aa)) folds into the RRM 3 domain.

The protein belongs to the CELF/BRUNOL family. In terms of assembly, oligomer. Oligomerization is required for RNA-binding and EDEN-dependent deadenylation. Post-translationally, phosphorylated during oocyte maturation and dephosphorylated following egg activation. Dephosphorylation is calcium dependent and correlates with the increase in the activity of EDEN-dependent deadenylation.

It localises to the nucleus. Its subcellular location is the cytoplasm. In terms of biological role, RNA-binding protein implicated in the regulation of several post-transcriptional events. May be involved in pre-mRNA alternative splicing, mRNA translation activation and stability. Mediates the rapid and sequence-specific cytoplasmic deadenylation of EDEN-containing maternal mRNAs following fertilization. Binds to AU-rich sequences (AREs) of jun mRNA. Binds to the embryonic deadenylation element (EDEN) motif localized in the 3'-UTR of maternal mRNAs. Binds to RNA containing several repeats of the consensus sequence 5'-UGU-3'. EDEN-dependent deadenylation is enhanced by the presence of an additional cis element composed of three AUU repeats. This is CUGBP Elav-like family member 1 (celf1) from Xenopus tropicalis (Western clawed frog).